The chain runs to 271 residues: Pyrroline-5-carboxylate reductase (271 aa).

Belongs to the pyrroline-5-carboxylate reductase family.

Its subcellular location is the cytoplasm. The catalysed reaction is L-proline + NADP(+) = (S)-1-pyrroline-5-carboxylate + NADPH + 2 H(+). It carries out the reaction L-proline + NAD(+) = (S)-1-pyrroline-5-carboxylate + NADH + 2 H(+). Its pathway is amino-acid biosynthesis; L-proline biosynthesis; L-proline from L-glutamate 5-semialdehyde: step 1/1. Catalyzes the reduction of 1-pyrroline-5-carboxylate (PCA) to L-proline. This is Pyrroline-5-carboxylate reductase from Staphylococcus saprophyticus subsp. saprophyticus (strain ATCC 15305 / DSM 20229 / NCIMB 8711 / NCTC 7292 / S-41).